A 373-amino-acid polypeptide reads, in one-letter code: MELSEIKRNIDTYNEKLEQLRGSLDLEAKETNIQEYEEMMTDPTFWDNQEKAQDVIDKNNALKSVVNAYRTLESELEDMDTTRALLLEEDDETMKQDLEQSVQDFKNELDQFELQLLLDGPYDANNAIMELHPGAGGTESQDWTNMLLRMYQRYCEQKGFNVEIADYLPGDEAGVKSVTLIVKGHNAYGYLKAEKGVHRLVRISPFDSSGRRHTSFASCDVIPQFNNTEIEIDINPDDITVDTFRASGAGGQHINKTESAIRITHHPTGIVVNNQNERSQIKNREAAMKTLKSKLYQLKIEEQEQEMAEIRGEQKEIGWGSQIRSYVFHPYAMVKDHRTNEETGKVDAVMDGDIGPFIEAFLRSQMDQHENEG.

The residue at position 252 (Gln-252) is an N5-methylglutamine.

Belongs to the prokaryotic/mitochondrial release factor family. In terms of processing, methylated by PrmC. Methylation increases the termination efficiency of RF2.

It is found in the cytoplasm. Functionally, peptide chain release factor 2 directs the termination of translation in response to the peptide chain termination codons UGA and UAA. The sequence is that of Peptide chain release factor 2 from Staphylococcus saprophyticus subsp. saprophyticus (strain ATCC 15305 / DSM 20229 / NCIMB 8711 / NCTC 7292 / S-41).